The primary structure comprises 331 residues: Beta-ketoacyl-[acyl-carrier-protein] synthase III (331 aa).

Active-site residues include Cys115 and His255. Positions 256 to 260 (QANFR) are ACP-binding. Residue Asn285 is part of the active site.

This sequence belongs to the thiolase-like superfamily. FabH family. Homodimer.

It is found in the cytoplasm. It carries out the reaction malonyl-[ACP] + acetyl-CoA + H(+) = 3-oxobutanoyl-[ACP] + CO2 + CoA. It participates in lipid metabolism; fatty acid biosynthesis. Catalyzes the condensation reaction of fatty acid synthesis by the addition to an acyl acceptor of two carbons from malonyl-ACP. Catalyzes the first condensation reaction which initiates fatty acid synthesis and may therefore play a role in governing the total rate of fatty acid production. Possesses both acetoacetyl-ACP synthase and acetyl transacylase activities. Its substrate specificity determines the biosynthesis of branched-chain and/or straight-chain of fatty acids. The polypeptide is Beta-ketoacyl-[acyl-carrier-protein] synthase III (Helicobacter pylori (strain Shi470)).